Reading from the N-terminus, the 340-residue chain is Ketol-acid reductoisomerase (NADP(+)) (340 aa).

The 182-residue stretch at 1–182 (MRVYYDRDCD…GGGRSGIIET (182 aa)) folds into the KARI N-terminal Rossmann domain. Residues 24–27 (YGSQ), Arg48, Ser51, Ser53, and 83–86 (DELQ) each bind NADP(+). His108 is a catalytic residue. Residue Gly134 participates in NADP(+) binding. The KARI C-terminal knotted domain occupies 183-329 (NFRQECETDL…EKLRGMMPWI (147 aa)). Asp191, Glu195, Glu227, and Glu231 together coordinate Mg(2+). Substrate is bound at residue Ser252.

This sequence belongs to the ketol-acid reductoisomerase family. Mg(2+) serves as cofactor.

The catalysed reaction is (2R)-2,3-dihydroxy-3-methylbutanoate + NADP(+) = (2S)-2-acetolactate + NADPH + H(+). It carries out the reaction (2R,3R)-2,3-dihydroxy-3-methylpentanoate + NADP(+) = (S)-2-ethyl-2-hydroxy-3-oxobutanoate + NADPH + H(+). The protein operates within amino-acid biosynthesis; L-isoleucine biosynthesis; L-isoleucine from 2-oxobutanoate: step 2/4. It participates in amino-acid biosynthesis; L-valine biosynthesis; L-valine from pyruvate: step 2/4. In terms of biological role, involved in the biosynthesis of branched-chain amino acids (BCAA). Catalyzes an alkyl-migration followed by a ketol-acid reduction of (S)-2-acetolactate (S2AL) to yield (R)-2,3-dihydroxy-isovalerate. In the isomerase reaction, S2AL is rearranged via a Mg-dependent methyl migration to produce 3-hydroxy-3-methyl-2-ketobutyrate (HMKB). In the reductase reaction, this 2-ketoacid undergoes a metal-dependent reduction by NADPH to yield (R)-2,3-dihydroxy-isovalerate. This Cereibacter sphaeroides (strain ATCC 17023 / DSM 158 / JCM 6121 / CCUG 31486 / LMG 2827 / NBRC 12203 / NCIMB 8253 / ATH 2.4.1.) (Rhodobacter sphaeroides) protein is Ketol-acid reductoisomerase (NADP(+)).